Here is a 266-residue protein sequence, read N- to C-terminus: PDZ domain-containing protein 9 (266 aa).

The PDZ domain maps to 27 to 109 (KVIQTKLTVG…GTVLQIKAYR (83 aa)).

The sequence is that of PDZ domain-containing protein 9 (Pdzd9) from Mus musculus (Mouse).